Reading from the N-terminus, the 407-residue chain is 1-deoxy-D-xylulose 5-phosphate reductoisomerase (407 aa).

NADPH is bound by residues Thr-25, Gly-26, Ser-27, Ile-28, Asn-53, and Asn-136. Residue Lys-137 participates in 1-deoxy-D-xylulose 5-phosphate binding. Residue Glu-138 coordinates NADPH. Asp-162 contacts Mn(2+). 1-deoxy-D-xylulose 5-phosphate is bound by residues Ser-163, Glu-164, Ser-188, and His-211. Residue Glu-164 participates in Mn(2+) binding. Gly-217 contacts NADPH. Residues Ser-224, Asn-229, Lys-230, and Glu-233 each contribute to the 1-deoxy-D-xylulose 5-phosphate site. Glu-233 serves as a coordination point for Mn(2+).

Belongs to the DXR family. Mg(2+) is required as a cofactor. Requires Mn(2+) as cofactor.

It catalyses the reaction 2-C-methyl-D-erythritol 4-phosphate + NADP(+) = 1-deoxy-D-xylulose 5-phosphate + NADPH + H(+). Its pathway is isoprenoid biosynthesis; isopentenyl diphosphate biosynthesis via DXP pathway; isopentenyl diphosphate from 1-deoxy-D-xylulose 5-phosphate: step 1/6. In terms of biological role, catalyzes the NADPH-dependent rearrangement and reduction of 1-deoxy-D-xylulose-5-phosphate (DXP) to 2-C-methyl-D-erythritol 4-phosphate (MEP). The sequence is that of 1-deoxy-D-xylulose 5-phosphate reductoisomerase from Rhodopseudomonas palustris (strain TIE-1).